Here is a 231-residue protein sequence, read N- to C-terminus: Ribose-5-phosphate isomerase A (231 aa).

Residues 32–35, 85–88, and 98–101 each bind substrate; these read TGST, DGAD, and KGGG. Glu107 acts as the Proton acceptor in catalysis. A substrate-binding site is contributed by Lys125.

It belongs to the ribose 5-phosphate isomerase family. As to quaternary structure, homodimer.

The enzyme catalyses aldehydo-D-ribose 5-phosphate = D-ribulose 5-phosphate. Its pathway is carbohydrate degradation; pentose phosphate pathway; D-ribose 5-phosphate from D-ribulose 5-phosphate (non-oxidative stage): step 1/1. Functionally, catalyzes the reversible conversion of ribose-5-phosphate to ribulose 5-phosphate. The sequence is that of Ribose-5-phosphate isomerase A from Burkholderia orbicola (strain MC0-3).